The sequence spans 165 residues: uncharacterized protein (165 aa).

It belongs to the IIV-6 196R family.

This is an uncharacterized protein from Invertebrate iridescent virus 3 (IIV-3).